A 24-amino-acid chain; its full sequence is Brevinin-1Pe (24 aa).

A disulfide bridge links C18 with C24.

As to expression, expressed by the skin glands.

The protein localises to the secreted. Functionally, antibacterial activity against Gram-positive bacterium S.aureus and Gram-negative bacterium E.coli. Has activity against C.albicans. The polypeptide is Brevinin-1Pe (Lithobates pipiens (Northern leopard frog)).